A 323-amino-acid chain; its full sequence is rRNA 2'-O-methyltransferase fibrillarin (323 aa).

The disordered stretch occupies residues M1–G78. Gly residues-rich tracts occupy residues P7–G44 and G63–G78. R8, R17, R23, and R29 each carry asymmetric dimethylarginine. S-adenosyl-L-methionine-binding positions include T174–T175, E193–F194, D218–A219, and D238–Q241. The interval A276–H308 is helical.

It belongs to the methyltransferase superfamily. Fibrillarin family. Component of box C/D small nucleolar ribonucleoprotein (snoRNP) particles. Part of the small subunit (SSU) processome, composed of more than 70 proteins and the RNA chaperone small nucleolar RNA (snoRNA) U3. By homology to other fibrillarins, some or all of the N-terminal domain arginines are modified to asymmetric dimethylarginine (DMA).

Its subcellular location is the nucleus. The protein localises to the nucleolus. It is found in the nucleoplasm. The enzyme catalyses L-glutaminyl-[histone H2A] + S-adenosyl-L-methionine = N(5)-methyl-L-glutaminyl-[histone H2A] + S-adenosyl-L-homocysteine + H(+). It carries out the reaction a ribonucleotide in rRNA + S-adenosyl-L-methionine = a 2'-O-methylribonucleotide in rRNA + S-adenosyl-L-homocysteine + H(+). The catalysed reaction is a ribonucleotide in U6 snRNA + S-adenosyl-L-methionine = a 2'-O-methylribonucleotide in U6 snRNA + S-adenosyl-L-homocysteine + H(+). Its function is as follows. S-adenosyl-L-methionine-dependent methyltransferase that has the ability to methylate both RNAs and proteins. Involved in pre-rRNA processing by catalyzing the site-specific 2'-hydroxyl methylation of ribose moieties in pre-ribosomal RNA. Probably catalyzes 2'-O-methylation of U6 snRNAs in box C/D RNP complexes. U6 snRNA 2'-O-methylation is required for mRNA splicing fidelity. Also acts as a protein methyltransferase by mediating methylation of 'Gln-105' of histone H2A (H2AQ104me), a modification that impairs binding of the FACT complex and is specifically present at 35S ribosomal DNA locus. Part of the small subunit (SSU) processome, first precursor of the small eukaryotic ribosomal subunit. During the assembly of the SSU processome in the nucleolus, many ribosome biogenesis factors, an RNA chaperone and ribosomal proteins associate with the nascent pre-rRNA and work in concert to generate RNA folding, modifications, rearrangements and cleavage as well as targeted degradation of pre-ribosomal RNA by the RNA exosome. This chain is rRNA 2'-O-methyltransferase fibrillarin (fbl), found in Xenopus laevis (African clawed frog).